The sequence spans 711 residues: Putative membrane protein IgaA homolog (711 aa).

Position 1 (M1) is a topological domain, periplasmic. A helical transmembrane segment spans residues 2 to 22 (STIVIFLAALLACSLLAGWLI). Residues 23–204 (KVRSRRRQLP…YALSRPRGLR (182 aa)) lie on the Cytoplasmic side of the membrane. 2 helical membrane-spanning segments follow: residues 205–225 (EALLIVASFLMFFFCLITPDV) and 226–246 (FVPWLAGGALLLLGAGLWGLF). At 247–339 (APPAKSSLRE…KNFPLQHWLR (93 aa)) the chain is on the cytoplasmic side. Residues 340–360 (STIIAAGSLLVLFMLLFWIPL) form a helical membrane-spanning segment. The Periplasmic portion of the chain corresponds to 361–655 (DMPLKFTLSW…IPDRSGLWRY (295 aa)). A helical membrane pass occupies residues 656–676 (LSTTLLLLTMLGSAIYNGVQA). Residues 677–711 (WRRYQRHRTRMMKIQAYYESCLNPQLITPSESLIE) are Cytoplasmic-facing.

It belongs to the IgaA family.

It localises to the cell inner membrane. The sequence is that of Putative membrane protein IgaA homolog (yrfF) from Escherichia coli O157:H7.